Consider the following 142-residue polypeptide: ATP synthase epsilon chain (142 aa).

Belongs to the ATPase epsilon chain family. F-type ATPases have 2 components, CF(1) - the catalytic core - and CF(0) - the membrane proton channel. CF(1) has five subunits: alpha(3), beta(3), gamma(1), delta(1), epsilon(1). CF(0) has three main subunits: a, b and c.

The protein resides in the cell inner membrane. Produces ATP from ADP in the presence of a proton gradient across the membrane. The polypeptide is ATP synthase epsilon chain (Koribacter versatilis (strain Ellin345)).